The following is a 331-amino-acid chain: Probable protein phosphatase 2C 1 (331 aa).

The segment at 1-29 is disordered; sequence MAASSTATRLSPPRLHAPTTPSPHLPLRR. Residues 48–292 enclose the PPM-type phosphatase domain; it reads THLIPHPRKA…DDITVIVAQV (245 aa). Positions 79, 80, 210, and 283 each coordinate Mn(2+). Residues 300–331 form a disordered region; it reads DEGVDEEKGQGDEQGSAVAVASSEQKEDSITT.

Belongs to the PP2C family. The cofactor is Mg(2+). Mn(2+) serves as cofactor.

The catalysed reaction is O-phospho-L-seryl-[protein] + H2O = L-seryl-[protein] + phosphate. It carries out the reaction O-phospho-L-threonyl-[protein] + H2O = L-threonyl-[protein] + phosphate. In Oryza sativa subsp. japonica (Rice), this protein is Probable protein phosphatase 2C 1.